A 606-amino-acid polypeptide reads, in one-letter code: Ubiquitin-like modifier-activating enzyme ATG7 (606 aa).

Positions 316-321 match the GXGXXG motif motif; that stretch reads GSGTLG. The Glycyl thioester intermediate role is filled by Cys-488. Residues 567-606 form a homodimerization region; the sequence is ALDDYKCVEKLSGLSKVQEEAELALEEDFDFSEDDEFVTG.

The protein belongs to the ATG7 family. In terms of assembly, homodimer. Interacts with ATG8 through a thioester bond between Cys-488 and the C-terminal Gly of ATG8 and with ATG12 through a thioester bond between Cys-488 and the C-terminal Gly of ATG12. Also interacts with ATG3.

The protein localises to the cytoplasm. It is found in the preautophagosomal structure. Its function is as follows. E1-like activating enzyme involved in the 2 ubiquitin-like systems required for cytoplasm to vacuole transport (Cvt) and autophagy. Activates ATG12 for its conjugation with ATG5 and ATG8 for its conjugation with phosphatidylethanolamine. Both systems are needed for the ATG8 association to Cvt vesicles and autophagosomes membranes. Autophagy is essential for maintenance of amino acid levels and protein synthesis under nitrogen starvation. Required for selective autophagic degradation of the nucleus (nucleophagy) as well as for mitophagy which contributes to regulate mitochondrial quantity and quality by eliminating the mitochondria to a basal level to fulfill cellular energy requirements and preventing excess ROS production. In Kluyveromyces marxianus (strain DMKU3-1042 / BCC 29191 / NBRC 104275) (Yeast), this protein is Ubiquitin-like modifier-activating enzyme ATG7.